Here is a 638-residue protein sequence, read N- to C-terminus: Chaperone protein HtpG (638 aa).

The segment at 1–346 (MSQQETHGFQ…SNDLPLNVSR (346 aa)) is a; substrate-binding. Residues 347–563 (EILQDNKVTT…EGEMSTQMIK (217 aa)) are b. The segment at 564–638 (LMEAAGQAVP…MNEMLLAKLK (75 aa)) is c.

This sequence belongs to the heat shock protein 90 family. In terms of assembly, homodimer.

The protein resides in the cytoplasm. In terms of biological role, molecular chaperone. Has ATPase activity. This chain is Chaperone protein HtpG, found in Shewanella sediminis (strain HAW-EB3).